The chain runs to 54 residues: Protein PIGBOS1 (54 aa).

Over 1–4 (MFRR) the chain is Mitochondrial intermembrane. The helical transmembrane segment at 5 to 25 (LTFAQLLFATVLGIAGGVYIF) threads the bilayer. Residues 26–54 (QPVFEQYAKDQKELKEKMQLVQESEEKKS) are Cytoplasmic-facing. The required for interaction with CLCC1 stretch occupies residues 30 to 36 (EQYAKDQ).

Homooligomer. Interacts (via C-terminus) with endoplasmic reticulum (ER) protein CLCC1; the interaction occurs at the mitochondria-associated ER membrane, a zone of contact between the ER and mitochondrial membranes, but does not appear to play a role in ER-mitochondria tethering and is not affected by ER stress.

It localises to the mitochondrion outer membrane. In terms of biological role, plays a role in regulation of the unfolded protein response triggered by endoplasmic reticulum (ER) stress resulting from the presence of unfolded proteins in the ER lumen. The polypeptide is Protein PIGBOS1 (Homo sapiens (Human)).